The chain runs to 119 residues: MGRQNVVVVFGLVFLAVLGLAAAASSPSPSASPSKAPSTSTPEVEAPVSEDTIGTTDDDAAASPGDDDVAVAGPLGSDSSYGSNGPSGSADSADSGAAALGVSAVVVGVTSIVGSFLFF.

Residues 1-23 (MGRQNVVVVFGLVFLAVLGLAAA) form the signal peptide. The segment covering 24–42 (ASSPSPSASPSKAPSTSTP) has biased composition (low complexity). Residues 24–95 (ASSPSPSASP…PSGSADSADS (72 aa)) are disordered. At 24–98 (ASSPSPSASP…SADSADSGAA (75 aa)) the chain is on the extracellular side. Over residues 56-69 (TDDDAAASPGDDDV) the composition is skewed to acidic residues. A compositionally biased stretch (low complexity) spans 82-95 (GSNGPSGSADSADS). A helical transmembrane segment spans residues 99-118 (ALGVSAVVVGVTSIVGSFLF). A topological domain (cytoplasmic) is located at residue F119.

In terms of tissue distribution, expressed in mature pollen grains, developing microspores and tapetal cells.

Its subcellular location is the membrane. Required for pollen fertility and development. Active in both diploid tapetum and haploid microspores. Major pollen protein. The sequence is that of Anther-specific protein BCP1 (BCP1) from Brassica campestris (Field mustard).